Here is a 153-residue protein sequence, read N- to C-terminus: Cornifin-B (153 aa).

2 disordered regions span residues 1–35 and 49–85; these read MSSH…PCVS and CHPK…HPKA. Tandem repeats lie at residues 27 to 34, 35 to 42, 43 to 50, 51 to 58, 59 to 66, 67 to 74, 75 to 82, 83 to 90, 91 to 98, 99 to 106, 107 to 114, 115 to 122, 123 to 130, and 131 to 138. Residues 27–138 form a 14 X 8 AA approximate tandem repeats region; the sequence is PPPPEPCVSQ…CQPIVPEPCP (112 aa).

It belongs to the cornifin (SPRR) family. As to expression, expressed in fetal periderm, hair follicles and in the thickened epidermis of the lip and footpad. Also present in the epithelia of various tissues such as the penis, vagina, forestomach, tongue and esophagus.

The protein localises to the cytoplasm. Functionally, cross-linked envelope protein of keratinocytes. It is a keratinocyte protein that first appears in the cell cytosol, but ultimately becomes cross-linked to membrane proteins by transglutaminase. All that results in the formation of an insoluble envelope beneath the plasma membrane. This chain is Cornifin-B (Sprr1b), found in Mus musculus (Mouse).